Consider the following 397-residue polypeptide: DnaJ homolog subfamily A member 1 (397 aa).

One can recognise a J domain in the interval 6–68 (TYYDVLGVKP…KKRELYDKGG (63 aa)). At Lys66 the chain carries N6-acetyllysine. Ser83 bears the Phosphoserine mark. The CR-type zinc-finger motif lies at 121–205 (GATRKLALQK…CNGRKIVREK (85 aa)). The Zn(2+) site is built by Cys134, Cys137, Cys150, Cys153, Cys177, Cys180, Cys193, and Cys196. 4 CXXCXGXG motif repeats span residues 134–141 (CDKCEGRG), 150–157 (CPNCRGTG), 177–184 (CMECQGHG), and 193–200 (CKSCNGRK). Ser335 is subject to Phosphoserine. A disordered region spans residues 352 to 397 (VEETDEMDQVELVDFDPNQERRRHYNGEAYEDDEHHPRGGVQCQTS). Positions 353–365 (EETDEMDQVELVD) are enriched in acidic residues. Tyr381 carries the post-translational modification Phosphotyrosine. A Cysteine methyl ester modification is found at Cys394. Cys394 carries the S-farnesyl cysteine lipid modification. Residues 395–397 (QTS) constitute a propeptide, removed in mature form.

Identified in a complex with HSPA1B and BAX. Interacts with RNF207.

It localises to the membrane. The protein resides in the cytoplasm. It is found in the microsome. The protein localises to the mitochondrion. Its subcellular location is the nucleus. It localises to the perinuclear region. Its function is as follows. Co-chaperone for HSPA8/Hsc70. Plays a role in protein transport into mitochondria via its role as co-chaperone. Functions as co-chaperone for HSPA1B and negatively regulates the translocation of BAX from the cytosol to mitochondria in response to cellular stress, thereby protecting cells against apoptosis. Stimulates ATP hydrolysis, but not the folding of unfolded proteins mediated by HSPA1A (in vitro). Promotes apoptosis in response to cellular stress mediated by exposure to anisomycin or UV. The chain is DnaJ homolog subfamily A member 1 (DNAJA1) from Chlorocebus aethiops (Green monkey).